A 469-amino-acid chain; its full sequence is Glutamate--tRNA ligase 1 (469 aa).

A 'HIGH' region motif is present at residues 10–20; that stretch reads PSPTGYLHVGG. Residues 252–256 carry the 'KMSKS' region motif; sequence KLSKR. Lys255 provides a ligand contact to ATP.

Belongs to the class-I aminoacyl-tRNA synthetase family. Glutamate--tRNA ligase type 1 subfamily. As to quaternary structure, monomer.

The protein resides in the cytoplasm. The catalysed reaction is tRNA(Glu) + L-glutamate + ATP = L-glutamyl-tRNA(Glu) + AMP + diphosphate. Its function is as follows. Catalyzes the attachment of glutamate to tRNA(Glu) in a two-step reaction: glutamate is first activated by ATP to form Glu-AMP and then transferred to the acceptor end of tRNA(Glu). This chain is Glutamate--tRNA ligase 1, found in Fervidobacterium nodosum (strain ATCC 35602 / DSM 5306 / Rt17-B1).